We begin with the raw amino-acid sequence, 285 residues long: Bifunctional protein FolD (285 aa).

Residues 166 to 168 (GAS) and I232 each bind NADP(+).

It belongs to the tetrahydrofolate dehydrogenase/cyclohydrolase family. As to quaternary structure, homodimer.

It carries out the reaction (6R)-5,10-methylene-5,6,7,8-tetrahydrofolate + NADP(+) = (6R)-5,10-methenyltetrahydrofolate + NADPH. The catalysed reaction is (6R)-5,10-methenyltetrahydrofolate + H2O = (6R)-10-formyltetrahydrofolate + H(+). Its pathway is one-carbon metabolism; tetrahydrofolate interconversion. Its function is as follows. Catalyzes the oxidation of 5,10-methylenetetrahydrofolate to 5,10-methenyltetrahydrofolate and then the hydrolysis of 5,10-methenyltetrahydrofolate to 10-formyltetrahydrofolate. The sequence is that of Bifunctional protein FolD from Baumannia cicadellinicola subsp. Homalodisca coagulata.